Here is a 217-residue protein sequence, read N- to C-terminus: Large ribosomal subunit protein uL3 (217 aa).

The tract at residues 137–160 (VSASHGSHRNHRKPGSIGASSTPS) is disordered.

Belongs to the universal ribosomal protein uL3 family. In terms of assembly, part of the 50S ribosomal subunit. Forms a cluster with proteins L14 and L19.

Its function is as follows. One of the primary rRNA binding proteins, it binds directly near the 3'-end of the 23S rRNA, where it nucleates assembly of the 50S subunit. This chain is Large ribosomal subunit protein uL3, found in Clavibacter sepedonicus (Clavibacter michiganensis subsp. sepedonicus).